The primary structure comprises 799 residues: Sodium- and chloride-dependent glycine transporter 2 (799 aa).

A disordered region spans residues 1-64 (MDCSAPKEMN…RSASTGAQTF (64 aa)). Residues 1–201 (MDCSAPKEMN…ARGNWSSKLD (201 aa)) lie on the Cytoplasmic side of the membrane. Low complexity predominate over residues 40–57 (PAAAPAAAVQPPRVPRSA). Phosphoserine is present on Ser58. At Thr59 the chain carries Phosphothreonine. Residue Ser86 is modified to Phosphoserine. Transmembrane regions (helical) follow at residues 202 to 222 (FILS…FPYL), 230 to 249 (AFLI…IFFL), and 273 to 293 (GCGI…NVII). Na(+)-binding residues include Gly208, Ala210, Val211, and Asn215. Over 294-395 (CYTLFYLFAS…AGIEYPGEIR (102 aa)) the chain is Extracellular. Cys313 and Cys322 form a disulfide bridge. N-linked (GlcNAc...) asparagine glycosylation is found at Asn345, Asn355, Asn360, and Asn366. The next 5 helical transmembrane spans lie at 396–414 (WPLA…ASLA), 423–440 (VVYF…ILLI), 476–493 (IFFS…LSSY), 505–526 (LIVT…FSVI), and 559–578 (LPLS…TLGL). Residues Ser479, Asn511, Leu576, and Asp579 each coordinate Na(+). 4 helical membrane passes run 606-624 (VFTL…PMIT), 640-660 (SYAL…VYGL), 681-700 (VCWA…FSFY), and 719-737 (LGWL…MFVI). The Cytoplasmic segment spans residues 738-799 (KMYLAPGRFI…VKDLELGTQC (62 aa)).

This sequence belongs to the sodium:neurotransmitter symporter (SNF) (TC 2.A.22) family. SLC6A5 subfamily. In terms of processing, N-glycosylated. In terms of tissue distribution, specifically expressed in spinal cord, brain stem, and to a lesser extent in the cerebellum.

It is found in the cell membrane. It carries out the reaction glycine(out) + chloride(out) + 3 Na(+)(out) = glycine(in) + chloride(in) + 3 Na(+)(in). In terms of biological role, sodium- and chloride-dependent glycine transporter. Terminates the action of glycine by its high affinity sodium-dependent reuptake into presynaptic terminals. May be responsible for the termination of neurotransmission at strychnine-sensitive glycinergic synapses. This is Sodium- and chloride-dependent glycine transporter 2 (Slc6a5) from Rattus norvegicus (Rat).